The chain runs to 815 residues: Phenylalanine--tRNA ligase beta subunit (815 aa).

Positions 39 to 153 (ASHAQGVVVG…NVPDLGQPVG (115 aa)) constitute a tRNA-binding domain. The B5 domain occupies 414-498 (KSAEPVKLRR…RLVGFDRFEA (85 aa)). 4 residues coordinate Mg(2+): Asp476, Asp482, Glu485, and Glu486. The FDX-ACB domain occupies 721 to 814 (PTVPAMELDL…LVKQFSAELR (94 aa)).

This sequence belongs to the phenylalanyl-tRNA synthetase beta subunit family. Type 1 subfamily. In terms of assembly, tetramer of two alpha and two beta subunits. Mg(2+) is required as a cofactor.

It localises to the cytoplasm. It catalyses the reaction tRNA(Phe) + L-phenylalanine + ATP = L-phenylalanyl-tRNA(Phe) + AMP + diphosphate + H(+). This is Phenylalanine--tRNA ligase beta subunit from Prochlorococcus marinus (strain MIT 9313).